The primary structure comprises 367 residues: 3-dehydroquinate synthase (367 aa).

Residues Asp-69 to Lys-74, Gly-103 to Asp-107, Thr-127 to Thr-128, Lys-140, and Lys-149 each bind NAD(+). Zn(2+) is bound by residues Glu-182, His-245, and His-262.

It belongs to the sugar phosphate cyclases superfamily. Dehydroquinate synthase family. Requires Co(2+) as cofactor. Zn(2+) is required as a cofactor. The cofactor is NAD(+).

The protein resides in the cytoplasm. The catalysed reaction is 7-phospho-2-dehydro-3-deoxy-D-arabino-heptonate = 3-dehydroquinate + phosphate. Its pathway is metabolic intermediate biosynthesis; chorismate biosynthesis; chorismate from D-erythrose 4-phosphate and phosphoenolpyruvate: step 2/7. In terms of biological role, catalyzes the conversion of 3-deoxy-D-arabino-heptulosonate 7-phosphate (DAHP) to dehydroquinate (DHQ). In Pseudomonas syringae pv. syringae (strain B728a), this protein is 3-dehydroquinate synthase.